The following is a 179-amino-acid chain: UPF0167 protein PA1536 (179 aa).

Belongs to the UPF0167 family.

The polypeptide is UPF0167 protein PA1536 (Pseudomonas aeruginosa (strain ATCC 15692 / DSM 22644 / CIP 104116 / JCM 14847 / LMG 12228 / 1C / PRS 101 / PAO1)).